The chain runs to 84 residues: Small ribosomal subunit protein bS20 (84 aa).

It belongs to the bacterial ribosomal protein bS20 family.

Binds directly to 16S ribosomal RNA. The chain is Small ribosomal subunit protein bS20 from Levilactobacillus brevis (strain ATCC 367 / BCRC 12310 / CIP 105137 / JCM 1170 / LMG 11437 / NCIMB 947 / NCTC 947) (Lactobacillus brevis).